A 467-amino-acid chain; its full sequence is uncharacterized protein (467 aa).

A disordered region spans residues 1–60 (MVRVSRGCQSCVDAKLQSTPSPSPSKSPSPTESPEQCLQKRQSGEQVVLPSRPFPRTSPR).

In terms of biological role, involved in osmoadaptation. This is an uncharacterized protein from Emericella nidulans (strain FGSC A4 / ATCC 38163 / CBS 112.46 / NRRL 194 / M139) (Aspergillus nidulans).